The primary structure comprises 227 residues: Orotidine 5'-phosphate decarboxylase (227 aa).

Substrate-binding positions include aspartate 8, lysine 30, 58–67, threonine 117, arginine 177, glutamine 186, glycine 206, and arginine 207; that span reads DLKVHDIPNT. The Proton donor role is filled by lysine 60.

The protein belongs to the OMP decarboxylase family. Type 1 subfamily. Homodimer.

The enzyme catalyses orotidine 5'-phosphate + H(+) = UMP + CO2. Its pathway is pyrimidine metabolism; UMP biosynthesis via de novo pathway; UMP from orotate: step 2/2. Catalyzes the decarboxylation of orotidine 5'-monophosphate (OMP) to uridine 5'-monophosphate (UMP). In Campylobacter fetus subsp. fetus (strain 82-40), this protein is Orotidine 5'-phosphate decarboxylase.